We begin with the raw amino-acid sequence, 387 residues long: Succinate--CoA ligase [ADP-forming] subunit beta (387 aa).

In terms of domain architecture, ATP-grasp spans 9–236 (RDLFEKYGVP…KAAADPLEAK (228 aa)). ATP contacts are provided by residues Lys-45, 52 to 54 (GRG), Ala-94, and Glu-99. The Mg(2+) site is built by Asn-191 and Asp-205. Residues Asn-256 and 318–320 (GIT) contribute to the substrate site.

This sequence belongs to the succinate/malate CoA ligase beta subunit family. In terms of assembly, heterotetramer of two alpha and two beta subunits. Mg(2+) is required as a cofactor.

The catalysed reaction is succinate + ATP + CoA = succinyl-CoA + ADP + phosphate. It carries out the reaction GTP + succinate + CoA = succinyl-CoA + GDP + phosphate. The protein operates within carbohydrate metabolism; tricarboxylic acid cycle; succinate from succinyl-CoA (ligase route): step 1/1. Succinyl-CoA synthetase functions in the citric acid cycle (TCA), coupling the hydrolysis of succinyl-CoA to the synthesis of either ATP or GTP and thus represents the only step of substrate-level phosphorylation in the TCA. The beta subunit provides nucleotide specificity of the enzyme and binds the substrate succinate, while the binding sites for coenzyme A and phosphate are found in the alpha subunit. In Leifsonia xyli subsp. xyli (strain CTCB07), this protein is Succinate--CoA ligase [ADP-forming] subunit beta.